Consider the following 350-residue polypeptide: 2-oxoglutarate-dependent ethylene/succinate-forming enzyme (350 aa).

Residues 166-286 (GWHHMRVLRF…RFACAYFHEP (121 aa)) form the Fe2OG dioxygenase domain. The Fe cation site is built by histidine 189 and histidine 268.

It belongs to the iron/ascorbate-dependent oxidoreductase family. Monomer. The cofactor is Fe(2+).

It carries out the reaction 2-oxoglutarate + O2 + 2 H(+) = ethene + 3 CO2 + H2O. It catalyses the reaction L-arginine + 2-oxoglutarate + O2 = guanidine + L-glutamate 5-semialdehyde + succinate + CO2. Its pathway is alkene biosynthesis; ethylene biosynthesis via 2-oxoglutarate. Its activity is regulated as follows. Activated by catalase. Inhibited by chelating reagents such as EDTA and Tiron (4,5-dihydroxy-1,3-benzene disulphonic acid), and by DTNB (5,5'-dithio-bis-2-nitrobenzoate) and hydrogen peroxide. Its function is as follows. Simultaneously catalyzes two reactions, namely formation of ethylene and of succinate from 2-oxoglutarate, with a molar ratio of 2:1. This Pseudomonas savastanoi pv. phaseolicola (Pseudomonas syringae pv. phaseolicola) protein is 2-oxoglutarate-dependent ethylene/succinate-forming enzyme (efe).